We begin with the raw amino-acid sequence, 237 residues long: Ribonuclease PH (237 aa).

Residues R86 and 124-126 (GTR) contribute to the phosphate site.

The protein belongs to the RNase PH family. As to quaternary structure, homohexameric ring arranged as a trimer of dimers.

The catalysed reaction is tRNA(n+1) + phosphate = tRNA(n) + a ribonucleoside 5'-diphosphate. Its function is as follows. Phosphorolytic 3'-5' exoribonuclease that plays an important role in tRNA 3'-end maturation. Removes nucleotide residues following the 3'-CCA terminus of tRNAs; can also add nucleotides to the ends of RNA molecules by using nucleoside diphosphates as substrates, but this may not be physiologically important. Probably plays a role in initiation of 16S rRNA degradation (leading to ribosome degradation) during starvation. The protein is Ribonuclease PH of Cereibacter sphaeroides (strain ATCC 17029 / ATH 2.4.9) (Rhodobacter sphaeroides).